We begin with the raw amino-acid sequence, 331 residues long: Ketol-acid reductoisomerase (NADP(+)) (331 aa).

The 181-residue stretch at 2–182 (ARMYYDSDAN…GGTRAGILET (181 aa)) folds into the KARI N-terminal Rossmann domain. NADP(+) contacts are provided by residues 25–28 (YGSQ), serine 51, serine 53, and 83–86 (DEVQ). Residue histidine 108 is part of the active site. Glycine 134 contributes to the NADP(+) binding site. The region spanning 183–328 (TFREETETDL…KDLRAMFSWL (146 aa)) is the KARI C-terminal knotted domain. Mg(2+)-binding residues include aspartate 191, glutamate 195, glutamate 227, and glutamate 231. A substrate-binding site is contributed by serine 252.

Belongs to the ketol-acid reductoisomerase family. Mg(2+) is required as a cofactor.

It carries out the reaction (2R)-2,3-dihydroxy-3-methylbutanoate + NADP(+) = (2S)-2-acetolactate + NADPH + H(+). The catalysed reaction is (2R,3R)-2,3-dihydroxy-3-methylpentanoate + NADP(+) = (S)-2-ethyl-2-hydroxy-3-oxobutanoate + NADPH + H(+). Its pathway is amino-acid biosynthesis; L-isoleucine biosynthesis; L-isoleucine from 2-oxobutanoate: step 2/4. It participates in amino-acid biosynthesis; L-valine biosynthesis; L-valine from pyruvate: step 2/4. Involved in the biosynthesis of branched-chain amino acids (BCAA). Catalyzes an alkyl-migration followed by a ketol-acid reduction of (S)-2-acetolactate (S2AL) to yield (R)-2,3-dihydroxy-isovalerate. In the isomerase reaction, S2AL is rearranged via a Mg-dependent methyl migration to produce 3-hydroxy-3-methyl-2-ketobutyrate (HMKB). In the reductase reaction, this 2-ketoacid undergoes a metal-dependent reduction by NADPH to yield (R)-2,3-dihydroxy-isovalerate. The chain is Ketol-acid reductoisomerase (NADP(+)) from Trichodesmium erythraeum (strain IMS101).